We begin with the raw amino-acid sequence, 544 residues long: Chaperonin GroEL (544 aa).

Residues 29–32 (TMGP), lysine 50, 86–90 (DGTTT), glycine 414, 477–479 (NAA), and aspartate 493 each bind ATP. A disordered region spans residues 525–544 (DKPAMPSMPDMGGMGMPGMM).

Belongs to the chaperonin (HSP60) family. Forms a cylinder of 14 subunits composed of two heptameric rings stacked back-to-back. Interacts with the co-chaperonin GroES.

It is found in the cytoplasm. The enzyme catalyses ATP + H2O + a folded polypeptide = ADP + phosphate + an unfolded polypeptide.. Functionally, together with its co-chaperonin GroES, plays an essential role in assisting protein folding. The GroEL-GroES system forms a nano-cage that allows encapsulation of the non-native substrate proteins and provides a physical environment optimized to promote and accelerate protein folding. The polypeptide is Chaperonin GroEL (Aliarcobacter butzleri (strain RM4018) (Arcobacter butzleri)).